The chain runs to 54 residues: MAVPKKRTSISKKRIRKNIWKRKGYWAALKALSLGKSLSTGNSKGFFVRQTNKS.

This sequence belongs to the bacterial ribosomal protein bL32 family.

It is found in the plastid. The protein localises to the chloroplast. The protein is Large ribosomal subunit protein bL32c of Panax ginseng (Korean ginseng).